The sequence spans 1387 residues: Kinesin-like protein KIF15-B (1387 aa).

Positions 26 to 364 (AIKVFVRIRP…LQFAQRAKLI (339 aa)) constitute a Kinesin motor domain. 110–117 (GQTGSGKT) provides a ligand contact to ATP. Positions 369-1383 (VVNEDTQGNV…NLFLKETKKC (1015 aa)) form a coiled coil. The interval 1138 to 1387 (NSPVVLAQTP…KETKKCEHCD (250 aa)) is necessary for its targeting to microtubule minus ends.

Belongs to the TRAFAC class myosin-kinesin ATPase superfamily. Kinesin family. KLP2 subfamily. Homodimer. Dimerization is required for targeting to microtubule minus ends. Found in a complex with tpx2 and microtubules. Its association with microtubules and targeting to microtubule minus ends requires tpx2. Strongly expressed in testis and weakly in lung (at protein level).

The protein resides in the cytoplasm. It localises to the cytoskeleton. Its subcellular location is the microtubule organizing center. It is found in the centrosome. The protein localises to the spindle. The protein resides in the spindle pole. Functionally, plus-end directed kinesin-like motor enzyme involved in mitotic spindle assembly. Required for centrosome separation and maintenance of spindle bipolarity during mitosis. The sequence is that of Kinesin-like protein KIF15-B (kif15-b) from Xenopus laevis (African clawed frog).